Here is a 414-residue protein sequence, read N- to C-terminus: CCA-adding enzyme (414 aa).

ATP is bound by residues G8 and R11. The CTP site is built by G8 and R11. The Mg(2+) site is built by D21 and D23. ATP contacts are provided by R91, R137, and R140. CTP is bound by residues R91, R137, and R140.

It belongs to the tRNA nucleotidyltransferase/poly(A) polymerase family. Bacterial CCA-adding enzyme type 2 subfamily. Mg(2+) is required as a cofactor.

The catalysed reaction is a tRNA precursor + 2 CTP + ATP = a tRNA with a 3' CCA end + 3 diphosphate. It catalyses the reaction a tRNA with a 3' CCA end + 2 CTP + ATP = a tRNA with a 3' CCACCA end + 3 diphosphate. Functionally, catalyzes the addition and repair of the essential 3'-terminal CCA sequence in tRNAs without using a nucleic acid template. Adds these three nucleotides in the order of C, C, and A to the tRNA nucleotide-73, using CTP and ATP as substrates and producing inorganic pyrophosphate. tRNA 3'-terminal CCA addition is required both for tRNA processing and repair. Also involved in tRNA surveillance by mediating tandem CCA addition to generate a CCACCA at the 3' terminus of unstable tRNAs. While stable tRNAs receive only 3'-terminal CCA, unstable tRNAs are marked with CCACCA and rapidly degraded. The polypeptide is CCA-adding enzyme (Buchnera aphidicola subsp. Acyrthosiphon pisum (strain Tuc7)).